We begin with the raw amino-acid sequence, 473 residues long: Fumarate hydratase class II (473 aa).

Substrate-binding positions include 104–106, 128–131, 138–140, and T186; these read SGT, HPND, and SSN. The active-site Proton donor/acceptor is the H187. S318 is a catalytic residue. Substrate contacts are provided by residues S319 and 324-326; that span reads KVN.

It belongs to the class-II fumarase/aspartase family. Fumarase subfamily. As to quaternary structure, homotetramer.

The protein localises to the cytoplasm. It carries out the reaction (S)-malate = fumarate + H2O. It participates in carbohydrate metabolism; tricarboxylic acid cycle; (S)-malate from fumarate: step 1/1. In terms of biological role, involved in the TCA cycle. Catalyzes the stereospecific interconversion of fumarate to L-malate. In Corynebacterium efficiens (strain DSM 44549 / YS-314 / AJ 12310 / JCM 11189 / NBRC 100395), this protein is Fumarate hydratase class II.